A 208-amino-acid chain; its full sequence is ATP-dependent Clp protease proteolytic subunit (208 aa).

Residue serine 106 is the Nucleophile of the active site. The active site involves histidine 131.

It belongs to the peptidase S14 family. As to quaternary structure, fourteen ClpP subunits assemble into 2 heptameric rings which stack back to back to give a disk-like structure with a central cavity, resembling the structure of eukaryotic proteasomes.

It is found in the cytoplasm. The enzyme catalyses Hydrolysis of proteins to small peptides in the presence of ATP and magnesium. alpha-casein is the usual test substrate. In the absence of ATP, only oligopeptides shorter than five residues are hydrolyzed (such as succinyl-Leu-Tyr-|-NHMec, and Leu-Tyr-Leu-|-Tyr-Trp, in which cleavage of the -Tyr-|-Leu- and -Tyr-|-Trp bonds also occurs).. In terms of biological role, cleaves peptides in various proteins in a process that requires ATP hydrolysis. Has a chymotrypsin-like activity. Plays a major role in the degradation of misfolded proteins. The chain is ATP-dependent Clp protease proteolytic subunit from Roseobacter denitrificans (strain ATCC 33942 / OCh 114) (Erythrobacter sp. (strain OCh 114)).